The sequence spans 87 residues: Small ribosomal subunit protein uS15 (87 aa).

Belongs to the universal ribosomal protein uS15 family. In terms of assembly, part of the 30S ribosomal subunit. Forms a bridge to the 50S subunit in the 70S ribosome, contacting the 23S rRNA.

One of the primary rRNA binding proteins, it binds directly to 16S rRNA where it helps nucleate assembly of the platform of the 30S subunit by binding and bridging several RNA helices of the 16S rRNA. Functionally, forms an intersubunit bridge (bridge B4) with the 23S rRNA of the 50S subunit in the ribosome. In Dehalococcoides mccartyi (strain ATCC BAA-2100 / JCM 16839 / KCTC 5957 / BAV1), this protein is Small ribosomal subunit protein uS15.